Consider the following 564-residue polypeptide: Dihydroxy-acid dehydratase (564 aa).

Residue Cys53 coordinates [2Fe-2S] cluster. Asp85 lines the Mg(2+) pocket. Cys126 contacts [2Fe-2S] cluster. Residues Asp127 and Lys128 each coordinate Mg(2+). Lys128 carries the N6-carboxylysine modification. [2Fe-2S] cluster is bound at residue Cys203. Residue Glu454 coordinates Mg(2+). Ser480 acts as the Proton acceptor in catalysis.

Belongs to the IlvD/Edd family. Homodimer. It depends on [2Fe-2S] cluster as a cofactor. Mg(2+) serves as cofactor.

It catalyses the reaction (2R)-2,3-dihydroxy-3-methylbutanoate = 3-methyl-2-oxobutanoate + H2O. It carries out the reaction (2R,3R)-2,3-dihydroxy-3-methylpentanoate = (S)-3-methyl-2-oxopentanoate + H2O. The protein operates within amino-acid biosynthesis; L-isoleucine biosynthesis; L-isoleucine from 2-oxobutanoate: step 3/4. Its pathway is amino-acid biosynthesis; L-valine biosynthesis; L-valine from pyruvate: step 3/4. In terms of biological role, functions in the biosynthesis of branched-chain amino acids. Catalyzes the dehydration of (2R,3R)-2,3-dihydroxy-3-methylpentanoate (2,3-dihydroxy-3-methylvalerate) into 2-oxo-3-methylpentanoate (2-oxo-3-methylvalerate) and of (2R)-2,3-dihydroxy-3-methylbutanoate (2,3-dihydroxyisovalerate) into 2-oxo-3-methylbutanoate (2-oxoisovalerate), the penultimate precursor to L-isoleucine and L-valine, respectively. This is Dihydroxy-acid dehydratase from Leifsonia xyli subsp. xyli (strain CTCB07).